A 239-amino-acid polypeptide reads, in one-letter code: Aspartate/glutamate leucyltransferase (239 aa).

It belongs to the R-transferase family. Bpt subfamily.

It is found in the cytoplasm. It carries out the reaction N-terminal L-glutamyl-[protein] + L-leucyl-tRNA(Leu) = N-terminal L-leucyl-L-glutamyl-[protein] + tRNA(Leu) + H(+). It catalyses the reaction N-terminal L-aspartyl-[protein] + L-leucyl-tRNA(Leu) = N-terminal L-leucyl-L-aspartyl-[protein] + tRNA(Leu) + H(+). Functions in the N-end rule pathway of protein degradation where it conjugates Leu from its aminoacyl-tRNA to the N-termini of proteins containing an N-terminal aspartate or glutamate. The polypeptide is Aspartate/glutamate leucyltransferase (Campylobacter jejuni (strain RM1221)).